The following is a 288-amino-acid chain: General transcription factor IIE subunit 2 (288 aa).

Positions 16–56 are disordered; sequence ALTTPAVEKRPSASSESSKKKRAKLELSSTSGSKPSSDGSN. Low complexity predominate over residues 41-56; the sequence is ELSSTSGSKPSSDGSN. A DNA-binding region (TFIIE beta) is located at residues 63–143; that stretch reads SLSGSSGYKF…YAFKPKYNLK (81 aa).

Belongs to the TFIIE beta subunit family. Tetramer of two alpha and two beta chains.

It is found in the nucleus. Functionally, recruits TFIIH to the initiation complex and stimulates the RNA polymerase II C-terminal domain kinase and DNA-dependent ATPase activities of TFIIH. Both TFIIH and TFIIE are required for promoter clearance by RNA polymerase. In Xenopus laevis (African clawed frog), this protein is General transcription factor IIE subunit 2 (gtf2e2).